The following is a 188-amino-acid chain: Elongation factor P (188 aa).

Lys-34 bears the N6-(3,6-diaminohexanoyl)-5-hydroxylysine mark.

The protein belongs to the elongation factor P family. Post-translationally, may be beta-lysylated on the epsilon-amino group of Lys-34 by the combined action of EpmA and EpmB, and then hydroxylated on the C5 position of the same residue by EpmC (if this protein is present). Lysylation is critical for the stimulatory effect of EF-P on peptide-bond formation. The lysylation moiety may extend toward the peptidyltransferase center and stabilize the terminal 3-CCA end of the tRNA. Hydroxylation of the C5 position on Lys-34 may allow additional potential stabilizing hydrogen-bond interactions with the P-tRNA.

It is found in the cytoplasm. Its pathway is protein biosynthesis; polypeptide chain elongation. Involved in peptide bond synthesis. Alleviates ribosome stalling that occurs when 3 or more consecutive Pro residues or the sequence PPG is present in a protein, possibly by augmenting the peptidyl transferase activity of the ribosome. Modification of Lys-34 is required for alleviation. The protein is Elongation factor P of Sodalis glossinidius (strain morsitans).